A 476-amino-acid chain; its full sequence is Ribulose bisphosphate carboxylase large chain (476 aa).

Substrate-binding residues include Asn-124 and Thr-174. The active-site Proton acceptor is the Lys-176. Substrate is bound at residue Lys-178. Mg(2+)-binding residues include Lys-202, Asp-204, and Glu-205. Position 202 is an N6-carboxylysine (Lys-202). His-295 (proton acceptor) is an active-site residue. Residues Arg-296, His-328, and Ser-380 each contribute to the substrate site.

This sequence belongs to the RuBisCO large chain family. Type I subfamily. In terms of assembly, heterohexadecamer of 8 large chains and 8 small chains; disulfide-linked. The disulfide link is formed within the large subunit homodimers. It depends on Mg(2+) as a cofactor. Post-translationally, the disulfide bond which can form in the large chain dimeric partners within the hexadecamer appears to be associated with oxidative stress and protein turnover.

It is found in the carboxysome. The enzyme catalyses 2 (2R)-3-phosphoglycerate + 2 H(+) = D-ribulose 1,5-bisphosphate + CO2 + H2O. It catalyses the reaction D-ribulose 1,5-bisphosphate + O2 = 2-phosphoglycolate + (2R)-3-phosphoglycerate + 2 H(+). In terms of biological role, ruBisCO catalyzes two reactions: the carboxylation of D-ribulose 1,5-bisphosphate, the primary event in carbon dioxide fixation, as well as the oxidative fragmentation of the pentose substrate in the photorespiration process. Both reactions occur simultaneously and in competition at the same active site. This is Ribulose bisphosphate carboxylase large chain from Acaryochloris marina (strain MBIC 11017).